The following is a 363-amino-acid chain: tRNA(Met) cytidine acetate ligase (363 aa).

Residues 7-20 (IAEFNPFHNGHKYL), glycine 96, asparagine 152, and arginine 175 each bind ATP.

The protein belongs to the TmcAL family.

The protein resides in the cytoplasm. The enzyme catalyses cytidine(34) in elongator tRNA(Met) + acetate + ATP = N(4)-acetylcytidine(34) in elongator tRNA(Met) + AMP + diphosphate. Functionally, catalyzes the formation of N(4)-acetylcytidine (ac(4)C) at the wobble position of elongator tRNA(Met), using acetate and ATP as substrates. First activates an acetate ion to form acetyladenylate (Ac-AMP) and then transfers the acetyl group to tRNA to form ac(4)C34. In Streptococcus thermophilus (strain ATCC BAA-491 / LMD-9), this protein is tRNA(Met) cytidine acetate ligase.